The sequence spans 392 residues: Galactokinase (392 aa).

40-43 (EHID) lines the substrate pocket. ATP-binding positions include serine 74 and 128–134 (GSGLSSS). Residues serine 134 and glutamate 167 each coordinate Mg(2+). Aspartate 179 (proton acceptor) is an active-site residue. Tyrosine 229 lines the substrate pocket.

Belongs to the GHMP kinase family. GalK subfamily.

It is found in the cytoplasm. It catalyses the reaction alpha-D-galactose + ATP = alpha-D-galactose 1-phosphate + ADP + H(+). The protein operates within carbohydrate metabolism; galactose metabolism. Catalyzes the transfer of the gamma-phosphate of ATP to D-galactose to form alpha-D-galactose-1-phosphate (Gal-1-P). This is Galactokinase from Clostridium tetani (strain Massachusetts / E88).